We begin with the raw amino-acid sequence, 72 residues long: MAKDDVIEVEGTVIETLPNAMFRVELENGHTVLAHVSGKIRMHFIRILPGDKVTVELSPYDLTRGRITYRYK.

The S1-like domain maps to 1 to 72; that stretch reads MAKDDVIEVE…TRGRITYRYK (72 aa). Position 60 is a phosphotyrosine (Tyr-60).

It belongs to the IF-1 family. Component of the 30S ribosomal translation pre-initiation complex which assembles on the 30S ribosome in the order IF-2 and IF-3, IF-1 and N-formylmethionyl-tRNA(fMet); mRNA recruitment can occur at any time during PIC assembly.

It is found in the cytoplasm. In terms of biological role, one of the essential components for the initiation of protein synthesis. Stabilizes the binding of IF-2 and IF-3 on the 30S subunit to which N-formylmethionyl-tRNA(fMet) subsequently binds. Helps modulate mRNA selection, yielding the 30S pre-initiation complex (PIC). Upon addition of the 50S ribosomal subunit IF-1, IF-2 and IF-3 are released leaving the mature 70S translation initiation complex. The chain is Translation initiation factor IF-1 from Geobacillus thermodenitrificans (strain NG80-2).